The following is a 498-amino-acid chain: Lysine--tRNA ligase (498 aa).

Mg(2+)-binding residues include glutamate 407 and glutamate 414.

This sequence belongs to the class-II aminoacyl-tRNA synthetase family. Homodimer. The cofactor is Mg(2+).

The protein resides in the cytoplasm. The enzyme catalyses tRNA(Lys) + L-lysine + ATP = L-lysyl-tRNA(Lys) + AMP + diphosphate. The protein is Lysine--tRNA ligase of Rhizobium etli (strain ATCC 51251 / DSM 11541 / JCM 21823 / NBRC 15573 / CFN 42).